The chain runs to 471 residues: 7-dehydrocholesterol reductase (471 aa).

Transmembrane regions (helical) follow at residues 36 to 56, 95 to 115, 144 to 164, 173 to 193, 233 to 253, 262 to 282, 302 to 322, and 327 to 347; these read LVSV…FIMA, LYAL…DFCH, LQAW…LSWF, WIPL…FAMI, LFFN…SFAA, VTNS…DFFW, LGWG…LYLV, and QLST…YYIF. NADP(+) contacts are provided by residues K354, R358, L391, W396, and 403–404; that span reads NY. The helical transmembrane segment at 416-436 threads the bilayer; sequence LACGGGHLLPYFYIIYMTILL. Residues D443, 447–451, and Y458 contribute to the NADP(+) site; that span reads CANKY.

It belongs to the ERG4/ERG24 family. As to quaternary structure, interacts with DHCR24; this interaction regulates DHCR7 activity. Interacts with TMEM147. Highest expression is detected in liver, followed by kidney and brain.

It is found in the endoplasmic reticulum membrane. It catalyses the reaction cholesterol + NADP(+) = 7-dehydrocholesterol + NADPH + H(+). It carries out the reaction 7-dehydrodesmosterol + NADPH + H(+) = desmosterol + NADP(+). The catalysed reaction is 5,6alpha-epoxy-5alpha-cholestan-3beta-ol + H2O = 5alpha-cholestane-3beta,5,6beta-triol. The enzyme catalyses 5,6beta-epoxy-5beta-cholestan-3beta-ol + H2O = 5alpha-cholestane-3beta,5,6beta-triol. It participates in steroid biosynthesis; cholesterol biosynthesis. Its function is as follows. Oxidoreductase that catalyzes the last step of the cholesterol synthesis pathway, which transforms cholesta-5,7-dien-3beta-ol (7-dehydrocholesterol,7-DHC) into cholesterol by reducing the C7-C8 double bond of its sterol core. Can also metabolize cholesta-5,7,24-trien-3beta-ol (7-dehydrodemosterol, 7-DHD) to desmosterol, which is then metabolized by the Delta(24)-sterol reductase (DHCR24) to cholesterol. Modulates ferroptosis (a form of regulated cell death driven by iron-dependent lipid peroxidation) through the metabolic breakdown of the anti-ferroptotic metabolites 7-DHC and 7-DHD which, when accumulated, divert the propagation of peroxyl radical-mediated damage from phospholipid components to its sterol core, protecting plasma and mitochondrial membranes from phospholipid autoxidation. In terms of biological role, component of the microsomal antiestrogen binding site (AEBS), a multiproteic complex at the ER membrane that consists of an association between cholestenol Delta-isomerase/EBP and DHCR7. This complex is responsible for cholesterol-5,6-epoxide hydrolase (ChEH) activity, which consists in the hydration of cholesterol-5,6-epoxides (5,6-EC) into cholestane-3beta,5alpha,6beta-triol (CT). The precise role of each component of this complex has not been described yet. The chain is 7-dehydrocholesterol reductase (Dhcr7) from Rattus norvegicus (Rat).